The chain runs to 219 residues: Ribonuclease T (219 aa).

The Exonuclease domain occupies 20–194 (VVIDIETAGF…YDSLQTANLF (175 aa)). The Mg(2+) site is built by D23, E25, H181, and D186. Residue H181 is the Proton donor/acceptor of the active site.

This sequence belongs to the RNase T family. As to quaternary structure, homodimer. Mg(2+) serves as cofactor.

In terms of biological role, trims short 3' overhangs of a variety of RNA species, leaving a one or two nucleotide 3' overhang. Responsible for the end-turnover of tRNA: specifically removes the terminal AMP residue from uncharged tRNA (tRNA-C-C-A). Also appears to be involved in tRNA biosynthesis. The chain is Ribonuclease T from Buchnera aphidicola subsp. Schizaphis graminum (strain Sg).